The following is a 302-amino-acid chain: Mitochondrial glycine transporter (302 aa).

3 Solcar repeats span residues His22–His112, Pro119–Leu203, and Phe213–Lys297. A run of 6 helical transmembrane segments spans residues Phe28–Gln53, Gly87–Phe113, Val125–Glu150, Gly178–Lys201, Leu217–Met243, and Gly272–Val290.

This sequence belongs to the mitochondrial carrier (TC 2.A.29) family. SLC25A38 subfamily.

It is found in the mitochondrion inner membrane. It carries out the reaction glycine(in) = glycine(out). In terms of biological role, mitochondrial glycine transporter that imports glycine into the mitochondrial matrix. Plays an important role in providing glycine for the first enzymatic step in heme biosynthesis, the condensation of glycine with succinyl-CoA to produce 5-aminolevulinate (ALA) in the mitochondrial matrix. Required during erythropoiesis. May play a role as pro-apoptotic protein that induces caspase-dependent apoptosis. This Xenopus laevis (African clawed frog) protein is Mitochondrial glycine transporter.